We begin with the raw amino-acid sequence, 631 residues long: 1,4-alpha-glucan branching enzyme GlgB (631 aa).

Aspartate 309 acts as the Nucleophile in catalysis. Residue glutamate 362 is the Proton donor of the active site.

The protein belongs to the glycosyl hydrolase 13 family. GlgB subfamily. As to quaternary structure, monomer.

The enzyme catalyses Transfers a segment of a (1-&gt;4)-alpha-D-glucan chain to a primary hydroxy group in a similar glucan chain.. It functions in the pathway glycan biosynthesis; glycogen biosynthesis. Its function is as follows. Catalyzes the formation of the alpha-1,6-glucosidic linkages in glycogen by scission of a 1,4-alpha-linked oligosaccharide from growing alpha-1,4-glucan chains and the subsequent attachment of the oligosaccharide to the alpha-1,6 position. This chain is 1,4-alpha-glucan branching enzyme GlgB, found in Marinobacter nauticus (strain ATCC 700491 / DSM 11845 / VT8) (Marinobacter aquaeolei).